Reading from the N-terminus, the 884-residue chain is Probable inorganic carbon transporter subunit DabA (884 aa).

Residues Cys390, Asp392, His582, and Cys597 each coordinate Zn(2+).

The protein belongs to the inorganic carbon transporter (TC 9.A.2) DabA family. As to quaternary structure, forms a complex with DabB. Zn(2+) is required as a cofactor.

It localises to the cell membrane. Part of an energy-coupled inorganic carbon pump. This is Probable inorganic carbon transporter subunit DabA from Staphylococcus saprophyticus subsp. saprophyticus (strain ATCC 15305 / DSM 20229 / NCIMB 8711 / NCTC 7292 / S-41).